We begin with the raw amino-acid sequence, 456 residues long: Sulfoacetaldehyde dehydrogenase (456 aa).

213-218 contributes to the NAD(+) binding site; that stretch reads GGTAAA. Active-site residues include Glu233 and Cys267.

It belongs to the aldehyde dehydrogenase family. Homotetramer.

It carries out the reaction sulfoacetaldehyde + NAD(+) + H2O = sulfoacetate + NADH + 2 H(+). Functionally, mediates conversion of 2-sulfoacetaldehyde into sulfoacetate. The enzyme is specific for NAD; NADP is not a substrate. Part of a pathway that can utilize the amino group of taurine as a sole source of nitrogen for growth. The sequence is that of Sulfoacetaldehyde dehydrogenase (safD) from Neptuniibacter caesariensis.